Consider the following 272-residue polypeptide: Inositol monophosphatase (272 aa).

The Mg(2+) site is built by Glu71, Asp90, Ile92, and Asp93. Residue Glu71 coordinates substrate. Substrate is bound by residues 92–95 (IDGT), 194–196 (GTA), Glu213, and Asp220. Position 220 (Asp220) interacts with Mg(2+).

The protein belongs to the inositol monophosphatase superfamily. Mg(2+) is required as a cofactor.

It localises to the cytoplasm. It carries out the reaction a myo-inositol phosphate + H2O = myo-inositol + phosphate. It catalyses the reaction alpha-D-galactose 1-phosphate + H2O = D-galactose + phosphate. Its pathway is polyol metabolism; myo-inositol biosynthesis; myo-inositol from D-glucose 6-phosphate: step 2/2. Inhibited by Li(+), Ca(2+) and Mn(2+), but also by Mg(2+) at concentrations above 3 mM. Its function is as follows. Responsible for the provision of inositol required for synthesis of phosphatidylinositol and polyphosphoinositides. Has broad substrate specificity and can use myo-inositol monophosphates, myo-inositol 1,3-diphosphate, myo-inositol 1,4-diphosphate, scyllo-inositol-phosphate, D-galactose 1-phosphate, glucose-1-phosphate, glucose-6-phosphate, fructose-1-phosphate, beta-glycerophosphate, and 2'-AMP as substrates. This chain is Inositol monophosphatase (impa1), found in Dictyostelium discoideum (Social amoeba).